The following is a 292-amino-acid chain: Phosphoribosylaminoimidazole-succinocarboxamide synthase (292 aa).

The protein belongs to the SAICAR synthetase family.

The enzyme catalyses 5-amino-1-(5-phospho-D-ribosyl)imidazole-4-carboxylate + L-aspartate + ATP = (2S)-2-[5-amino-1-(5-phospho-beta-D-ribosyl)imidazole-4-carboxamido]succinate + ADP + phosphate + 2 H(+). Its pathway is purine metabolism; IMP biosynthesis via de novo pathway; 5-amino-1-(5-phospho-D-ribosyl)imidazole-4-carboxamide from 5-amino-1-(5-phospho-D-ribosyl)imidazole-4-carboxylate: step 1/2. The polypeptide is Phosphoribosylaminoimidazole-succinocarboxamide synthase (Thermodesulfovibrio yellowstonii (strain ATCC 51303 / DSM 11347 / YP87)).